We begin with the raw amino-acid sequence, 434 residues long: GTPase Obg (434 aa).

One can recognise an Obg domain in the interval 1 to 158; it reads MFLDTAKIKV…RELQLELKIL (158 aa). The 178-residue stretch at 159–336 folds into the OBG-type G domain; the sequence is ADVGLVGFPS…LLDATAELLD (178 aa). Residues 165–172, 190–194, 212–215, 282–285, and 317–319 each bind GTP; these read GFPSVGKS, FTTIV, DLPG, NKMD, and SGL. Mg(2+) is bound by residues Ser-172 and Thr-192. The 79-residue stretch at 356–434 folds into the OCT domain; it reads GFDEEEKAFE…IGKFEFEFVD (79 aa).

It belongs to the TRAFAC class OBG-HflX-like GTPase superfamily. OBG GTPase family. As to quaternary structure, monomer. Requires Mg(2+) as cofactor.

Its subcellular location is the cytoplasm. Functionally, an essential GTPase which binds GTP, GDP and possibly (p)ppGpp with moderate affinity, with high nucleotide exchange rates and a fairly low GTP hydrolysis rate. Plays a role in control of the cell cycle, stress response, ribosome biogenesis and in those bacteria that undergo differentiation, in morphogenesis control. This Streptococcus pneumoniae (strain ATCC 700669 / Spain 23F-1) protein is GTPase Obg.